The sequence spans 682 residues: Polycomb protein suz12-B (682 aa).

Residues 326–355 form a disordered region; it reads DPSDPSTAPVAKPLSTRNSDTSTTESRIST. The segment covering 340-354 has biased composition (polar residues); sequence STRNSDTSTTESRIS. Residues 408 to 431 form a C2H2-type zinc finger; the sequence is LHCPWCTLNCRKLYSLLKHLKLSH. The tract at residues 523 to 599 is VEFS-box; that stretch reads RLYFHSDSCM…NQMSQASMLF (77 aa).

The protein belongs to the VEFS (VRN2-EMF2-FIS2-SU(Z)12) family. As to quaternary structure, component of the prc2/eed-ezh2 complex.

It localises to the nucleus. In terms of biological role, polycomb group (PcG) protein. Component of the prc2/eed-ezh2 complex, which methylates 'Lys-9' and 'Lys-27' of histone H3, leading to transcriptional repression of the affected target gene. The chain is Polycomb protein suz12-B (suz12b) from Danio rerio (Zebrafish).